We begin with the raw amino-acid sequence, 284 residues long: uncharacterized protein (284 aa).

The next 3 helical transmembrane spans lie at 174 to 194 (LFVL…YISI), 217 to 237 (MLIP…PGTA), and 241 to 261 (LIVL…SGSC).

It is found in the membrane. This is an uncharacterized protein from Saccharomyces cerevisiae (strain ATCC 204508 / S288c) (Baker's yeast).